Reading from the N-terminus, the 153-residue chain is Protein SREK1IP1 (153 aa).

The CCHC-type zinc-finger motif lies at 13–30 (AGCRKCGYPGHLTFECRN). A disordered region spans residues 44 to 153 (VSSTSSEDSD…SPNRSEVTKK (110 aa)). Ser-52 carries the post-translational modification Phosphoserine. Residues 66 to 84 (QEKRINEEEEKKKEKSREK) are compositionally biased toward basic and acidic residues. Positions 85 to 94 (IKLKKKRKRS) are enriched in basic residues. 2 positions are modified to phosphoserine: Ser-96 and Ser-97. The span at 106–141 (QKKQKYQKKEKKKEKKNKSKKGKHHKKEKKKRKKEK) shows a compositional bias: basic residues.

As to quaternary structure, interacts with SREK1/SFRS12.

Possible splicing regulator involved in the control of cellular survival. This is Protein SREK1IP1 (Srek1ip1) from Rattus norvegicus (Rat).